The primary structure comprises 369 residues: 2-aminoethylphosphonate--pyruvate transaminase (369 aa).

Lysine 193 is modified (N6-(pyridoxal phosphate)lysine).

This sequence belongs to the class-V pyridoxal-phosphate-dependent aminotransferase family. PhnW subfamily. Homodimer. Pyridoxal 5'-phosphate serves as cofactor.

It carries out the reaction (2-aminoethyl)phosphonate + pyruvate = phosphonoacetaldehyde + L-alanine. Involved in phosphonate degradation. In Burkholderia mallei (strain NCTC 10247), this protein is 2-aminoethylphosphonate--pyruvate transaminase.